Here is a 423-residue protein sequence, read N- to C-terminus: Gamma-glutamyl phosphate reductase (423 aa).

Belongs to the gamma-glutamyl phosphate reductase family.

It localises to the cytoplasm. It carries out the reaction L-glutamate 5-semialdehyde + phosphate + NADP(+) = L-glutamyl 5-phosphate + NADPH + H(+). The protein operates within amino-acid biosynthesis; L-proline biosynthesis; L-glutamate 5-semialdehyde from L-glutamate: step 2/2. Catalyzes the NADPH-dependent reduction of L-glutamate 5-phosphate into L-glutamate 5-semialdehyde and phosphate. The product spontaneously undergoes cyclization to form 1-pyrroline-5-carboxylate. The chain is Gamma-glutamyl phosphate reductase from Burkholderia ambifaria (strain ATCC BAA-244 / DSM 16087 / CCUG 44356 / LMG 19182 / AMMD) (Burkholderia cepacia (strain AMMD)).